The chain runs to 635 residues: Threonine--tRNA ligase (635 aa).

Positions 1-61 (MVSIRLPDGS…DRDASLAIVT (61 aa)) constitute a TGS domain. A catalytic region spans residues 242–533 (DHRKLGKQLD…LIEHHAGAMP (292 aa)). Residues Cys333, His384, and His510 each contribute to the Zn(2+) site.

Belongs to the class-II aminoacyl-tRNA synthetase family. In terms of assembly, homodimer. Zn(2+) is required as a cofactor.

The protein localises to the cytoplasm. It catalyses the reaction tRNA(Thr) + L-threonine + ATP = L-threonyl-tRNA(Thr) + AMP + diphosphate + H(+). Functionally, catalyzes the attachment of threonine to tRNA(Thr) in a two-step reaction: L-threonine is first activated by ATP to form Thr-AMP and then transferred to the acceptor end of tRNA(Thr). Also edits incorrectly charged L-seryl-tRNA(Thr). The polypeptide is Threonine--tRNA ligase (Burkholderia lata (strain ATCC 17760 / DSM 23089 / LMG 22485 / NCIMB 9086 / R18194 / 383)).